The following is a 471-amino-acid chain: Coronin-6 (471 aa).

5 WD repeats span residues 79–119 (GHTG…PVRN), 129–169 (GHSK…VLLS), 173–212 (IHPDVIHSVCWNSNGSLLATTCKDKTLRIIDPRKSQVVAE), 216–259 (PHEG…EPVA), and 264–304 (DTSN…PFVH). A disordered region spans residues 410-433 (ILDVRPPASPRRSQSASEAPLSQH). A compositionally biased stretch (low complexity) spans 419–429 (PRRSQSASEAP). A coiled-coil region spans residues 426–468 (SEAPLSQHTLETLLEEIKALRDRVQAQEERITALENMLCELVD).

This Mus musculus (Mouse) protein is Coronin-6 (Coro6).